The sequence spans 182 residues: Putative manganese efflux pump MntP (182 aa).

The next 6 membrane-spanning stretches (helical) occupy residues 6-26 (LIPLIIMAFALGMDAFSVSLG), 37-57 (ILYIGMTIGIFHIIMPFIGMV), 72-92 (FAGAILLIGLGFYIVYSSILE), 101-121 (IGISLFVFAFGVSIDSFSVGL), 131-151 (IITILLFGLISMLLAWMGLLL), and 162-182 (YGEIVGGIILVGFGLYLLFPI).

It belongs to the MntP (TC 9.B.29) family.

It localises to the cell membrane. In terms of biological role, probably functions as a manganese efflux pump. This chain is Putative manganese efflux pump MntP, found in Bacillus mycoides (strain KBAB4) (Bacillus weihenstephanensis).